A 418-amino-acid chain; its full sequence is Serine hydroxymethyltransferase (418 aa).

(6S)-5,6,7,8-tetrahydrofolate-binding positions include Leu-121 and Gly-125–Leu-127. Residue Lys-230 is modified to N6-(pyridoxal phosphate)lysine. (6S)-5,6,7,8-tetrahydrofolate-binding positions include Glu-246 and Ser-355 to Phe-357.

The protein belongs to the SHMT family. As to quaternary structure, homodimer. Pyridoxal 5'-phosphate serves as cofactor.

It localises to the cytoplasm. It carries out the reaction (6R)-5,10-methylene-5,6,7,8-tetrahydrofolate + glycine + H2O = (6S)-5,6,7,8-tetrahydrofolate + L-serine. It participates in one-carbon metabolism; tetrahydrofolate interconversion. It functions in the pathway amino-acid biosynthesis; glycine biosynthesis; glycine from L-serine: step 1/1. Its function is as follows. Catalyzes the reversible interconversion of serine and glycine with tetrahydrofolate (THF) serving as the one-carbon carrier. This reaction serves as the major source of one-carbon groups required for the biosynthesis of purines, thymidylate, methionine, and other important biomolecules. Also exhibits THF-independent aldolase activity toward beta-hydroxyamino acids, producing glycine and aldehydes, via a retro-aldol mechanism. This Streptococcus pneumoniae serotype 4 (strain ATCC BAA-334 / TIGR4) protein is Serine hydroxymethyltransferase.